Reading from the N-terminus, the 430-residue chain is Isocitrate dehydrogenase [NADP], mitochondrial (430 aa).

The transit peptide at 1–27 (MIRASAIQRTAMLLRQLRGFSTSATLA) directs the protein to the mitochondrion. Residues 101–103 (TIT) and Arg108 contribute to the NADP(+) site. Thr103 is a substrate binding site. Residues 120–126 (SPNGTIR), Arg135, and Arg158 contribute to the substrate site. Asp277 provides a ligand contact to Mn(2+). Lys285 provides a ligand contact to NADP(+). Asp300 is a Mn(2+) binding site. NADP(+)-binding positions include 335–340 (GTVTRH) and Asn353.

Belongs to the isocitrate and isopropylmalate dehydrogenases family. Homodimer. Mg(2+) serves as cofactor. Requires Mn(2+) as cofactor.

It localises to the mitochondrion. The enzyme catalyses D-threo-isocitrate + NADP(+) = 2-oxoglutarate + CO2 + NADPH. In terms of biological role, mitochondrial IDP1 may regulate flux through the tricarboxylic acid cycle and respiration. Its probably critical function is the production of NADPH. The chain is Isocitrate dehydrogenase [NADP], mitochondrial (IDP1) from Candida tropicalis (Yeast).